Reading from the N-terminus, the 165-residue chain is Glycosyl-4,4'-diaponeurosporenoate acyltransferase (165 aa).

An N-terminal signal peptide occupies residues 1-28 (MKTMKKYIKTAFFCSMYWLIVQLNIANL). A helical membrane pass occupies residues 126-145 (YINIFYAMIANVPIIIVQRY).

It belongs to the acyltransferase CrtO family.

The protein resides in the cell membrane. Its pathway is carotenoid biosynthesis; staphyloxanthin biosynthesis; staphyloxanthin from farnesyl diphosphate: step 5/5. Its function is as follows. Catalyzes the acylation of glycosyl-4,4'-diaponeurosporenoate, i.e. the esterification of glucose at the C6'' position with the carboxyl group of the C(15) fatty acid 12-methyltetradecanoic acid, to yield staphyloxanthin. This is the last step in the biosynthesis of this orange pigment, present in most staphylococci strains. The sequence is that of Glycosyl-4,4'-diaponeurosporenoate acyltransferase (crtO) from Staphylococcus aureus (strain Newman).